We begin with the raw amino-acid sequence, 305 residues long: Olfactory receptor 4B13 (305 aa).

Topologically, residues 1–25 are extracellular; that stretch reads MANKNNVTELIFTGLFQDPEVQKVC. The N-linked (GlcNAc...) asparagine glycan is linked to N6. Residues 26 to 46 form a helical membrane-spanning segment; that stretch reads FVLFLPVYLATLLGNSLILVA. Over 47–55 the chain is Cytoplasmic; sequence VSISKTLHS. A helical transmembrane segment spans residues 56 to 76; sequence PMYFFLSSLSLVEICYSSTIV. Residues 77–95 lie on the Extracellular side of the membrane; it reads PKFITDLLAKVKTISLKGC. Cysteines 95 and 187 form a disulfide. A helical transmembrane segment spans residues 96 to 116; that stretch reads LTQIFFSHFFGVVEVILLVVM. The Cytoplasmic portion of the chain corresponds to 117-141; that stretch reads AYDRYVAICKPLHYMNIMSRQVCHM. Residues 142–162 traverse the membrane as a helical segment; the sequence is LVAGSWLGGFIHSIIQIIITI. At 163–202 the chain is on the extracellular side; the sequence is PLPFCGPNVIDHYFCDLQQLFKLACTDTFMEGFIVMANSG. A helical membrane pass occupies residues 203–223; sequence LISIVSLFILVSSYAVILISL. The Cytoplasmic segment spans residues 224-236; it reads RKRSAEGRRKALS. Residues 237–257 traverse the membrane as a helical segment; sequence TCASHITVVILFFVPGAFIYM. Over 258 to 266 the chain is Extracellular; it reads RPSSTFTED. The helical transmembrane segment at 267–287 threads the bilayer; the sequence is KLVSVFYTVITPMLNPIVYTL. Over 288–305 the chain is Cytoplasmic; sequence RNTEMKNAIRMSWKQKDS.

It belongs to the G-protein coupled receptor 1 family.

The protein resides in the cell membrane. Functionally, odorant receptor. The polypeptide is Olfactory receptor 4B13 (Mus musculus (Mouse)).